The primary structure comprises 245 residues: Histone deacetylase HDT1 (245 aa).

N-acetylmethionine is present on methionine 1. Required to repress transcription regions lie at residues 2–5 (EFWG) and 101–162 (GYSE…EEEE). The segment at 99 to 245 (PQGYSEEEEE…HNKAKHAAAK (147 aa)) is disordered. Acidic residues predominate over residues 103–113 (SEEEEEEEEEV). Over residues 114–124 (PAGNAAKAVAK) the composition is skewed to low complexity. A compositionally biased stretch (acidic residues) spans 137 to 162 (DDEEDESDSDGMDEDDSDGEDSEEEE). A compositionally biased stretch (low complexity) spans 178 to 195 (TTPKAPVSAKKAKVAVTP). Over residues 208 to 234 (ANQSPKSASQVSCGSCKKTFNSGNALE) the composition is skewed to polar residues. Serine 211 is subject to Phosphoserine. The segment at 218–241 (VSCGSCKKTFNSGNALESHNKAKH) adopts a C2H2-type zinc-finger fold.

It belongs to the histone deacetylase HD2 family. In terms of assembly, interacts with DNMT2. Interacts with DEK3. As to expression, expressed in leaves, roots, stems, young plantlets, flowers and siliques. Highest levels in ovules, embryos, shoot apical meristems and first leaves. Also expressed in somatic embryos.

The protein localises to the nucleus. It is found in the nucleolus. Functionally, probably mediates the deacetylation of lysine residues on the N-terminal part of the core histones (H2A, H2B, H3 and H4). Histone deacetylation gives a tag for epigenetic repression and plays an important role in transcriptional regulation, cell cycle progression and developmental events. Required for histone H3 'Lys-9' deacetylation. Involved in rRNA gene silencing in nucleolar dominance. Seems to be implicated in the regulation of genes involved in seeds development. The chain is Histone deacetylase HDT1 from Arabidopsis thaliana (Mouse-ear cress).